Consider the following 225-residue polypeptide: C-reactive protein (225 aa).

Positions M1–G18 are cleaved as a signal peptide. One can recognise a Pentraxin (PTX) domain in the interval S23 to N225. C54 and C116 form a disulfide bridge. Ca(2+)-binding residues include D78, D157, P158, D159, and Q169.

This sequence belongs to the pentraxin family. As to quaternary structure, homotrimer. Ca(2+) serves as cofactor.

It localises to the secreted. In terms of biological role, displays several functions associated with host defense: it promotes agglutination, bacterial capsular swelling, phagocytosis, and complement fixation through its calcium-dependent binding to phosphorylcholine. The chain is C-reactive protein from Danio rerio (Zebrafish).